The primary structure comprises 314 residues: Ribonucleoside-diphosphate reductase small subunit (314 aa).

D73, E103, and H106 together coordinate Fe cation. Y110 is a catalytic residue. Residues 160–180 (VLMILIEGIFFSSSFAAIAYL) traverse the membrane as a helical segment. Fe cation contacts are provided by E166, E200, and H203.

Belongs to the ribonucleoside diphosphate reductase small chain family. As to quaternary structure, heterotetramer composed of a homodimer of the large subunit (R1) and a homodimer of the small subunit (R2). Larger multisubunit protein complex are also active, composed of (R1)n(R2)n. Fe cation is required as a cofactor.

It is found in the host membrane. The enzyme catalyses a 2'-deoxyribonucleoside 5'-diphosphate + [thioredoxin]-disulfide + H2O = a ribonucleoside 5'-diphosphate + [thioredoxin]-dithiol. Functionally, ribonucleoside-diphosphate reductase holoenzyme provides the precursors necessary for viral DNA synthesis. Allows virus growth in non-dividing cells, as well as reactivation from latency in infected hosts. Catalyzes the biosynthesis of deoxyribonucleotides from the corresponding ribonucleotides. This is Ribonucleoside-diphosphate reductase small subunit from Bovine herpesvirus 1.1 (strain Cooper) (BoHV-1).